Consider the following 1806-residue polypeptide: MEPWSSRWKTKRWLWDFTVTTLALTFLFQAREVRGAAPVDVLKALDFHNSPEGISKTTGFCTNRKNSKGSDTAYRVSKQAQLSAPTKQLFPGGTFPEDFSILFTVKPKKGIQSFLLSIYNEHGIQQIGVEVGRSPVFLFEDHTGKPAPEDYPLFRTVNIADGKWHRVAISVEKKTVTMIVDCKKKTTKPLDRSERAIVDTNGITVFGTRILDEEVFEGDIQQFLITGDPKAAYDYCEHYSPDCDSSAPKAAQAQEPQIDEYAPEDIIEYDYEYGEAEYKEAESVTEGPTVTEETIAQTEANIVDDFQEYNYGTMESYQTEAPRHVSGTNEPNPVEEIFTEEYLTGEDYDSQRKNSEDTLYENKEIDGRDSDLLVDGDLGEYDFYEYKEYEDKPTSPPNEEFGPGVPAETDITETSINGHGAYGEKGQKGEPAVVEPGMLVEGPPGPAGPAGIMGPPGLQGPTGPPGDPGDRGPPGRPGLPGADGLPGPPGTMLMLPFRYGGDGSKGPTISAQEAQAQAILQQARIALRGPPGPMGLTGRPGPVGGPGSSGAKGESGDPGPQGPRGVQGPPGPTGKPGKRGRPGADGGRGMPGEPGAKGDRGFDGLPGLPGDKGHRGERGPQGPPGPPGDDGMRGEDGEIGPRGLPGEAGPRGLLGPRGTPGAPGQPGMAGVDGPPGPKGNMGPQGEPGPPGQQGNPGPQGLPGPQGPIGPPGEKGPQGKPGLAGLPGADGPPGHPGKEGQSGEKGALGPPGPQGPIGYPGPRGVKGADGVRGLKGSKGEKGEDGFPGFKGDMGLKGDRGEVGQIGPRGEDGPEGPKGRAGPTGDPGPSGQAGEKGKLGVPGLPGYPGRQGPKGSTGFPGFPGANGEKGARGVAGKPGPRGQRGPTGPRGSRGARGPTGKPGPKGTSGGDGPPGPPGERGPQGPQGPVGFPGPKGPPGPPGKDGLPGHPGQRGETGFQGKTGPPGPGGVVGPQGPTGETGPIGERGHPGPPGPPGEQGLPGAAGKEGAKGDPGPQGISGKDGPAGLRGFPGERGLPGAQGAPGLKGGEGPQGPPGPVGSPGERGSAGTAGPIGLPGRPGPQGPPGPAGEKGAPGEKGPQGPAGRDGVQGPVGLPGPAGPAGSPGEDGDKGEIGEPGQKGSKGDKGENGPPGPPGLQGPVGAPGIAGGDGEPGPRGQQGMFGQKGDEGARGFPGPPGPIGLQGLPGPPGEKGENGDVGPMGPPGPPGPRGPQGPNGADGPQGPPGSVGSVGGVGEKGEPGEAGNPGPPGEAGVGGPKGERGEKGEAGPPGAAGPPGAKGPPGDDGPKGNPGPVGFPGDPGPPGEPGPAGQDGVGGDKGEDGDPGQPGPPGPSGEAGPPGPPGKRGPPGAAGAEGRQGEKGAKGEAGAEGPPGKTGPVGPQGPAGKPGPEGLRGIPGPVGEQGLPGAAGQDGPPGPMGPPGLPGLKGDPGSKGEKGHPGLIGLIGPPGEQGEKGDRGLPGTQGSPGAKGDGGIPGPAGPLGPPGPPGLPGPQGPKGNKGSTGPAGQKGDSGLPGPPGSPGPPGEVIQPLPILSSKKTRRHTEGMQADADDNILDYSDGMEEIFGSLNSLKQDIEHMKFPMGTQTNPARTCKDLQLSHPDFPDGEYWIDPNQGCSGDSFKVYCNFTSGGETCIYPDKKSEGVRISSWPKEKPGSWFSEFKRGKLLSYLDVEGNSINMVQMTFLKLLTASARQNFTYHCHQSAAWYDVSSGSYDKALRFLGSNDEEMSYDNNPFIKTLYDGCASRKGYEKTVIEINTPKIDQVPIVDVMINDFGDQNQKFGFEVGPVCFLG.

The N-terminal stretch at 1–35 (MEPWSSRWKTKRWLWDFTVTTLALTFLFQAREVRG) is a signal peptide. Positions 36–511 (AAPVDVLKAL…DGSKGPTISA (476 aa)) are cleaved as a propeptide — N-terminal propeptide. Cystine bridges form between C61–C243 and C182–C236. The Laminin G-like domain maps to 71 to 243 (DTAYRVSKQA…DYCEHYSPDC (173 aa)). The tract at residues 230–419 (KAAYDYCEHY…DITETSINGH (190 aa)) is nonhelical region. The segment at 420-508 (GAYGEKGQKG…YGGDGSKGPT (89 aa)) is triple-helical region (interrupted). The disordered stretch occupies residues 439-508 (LVEGPPGPAG…YGGDGSKGPT (70 aa)). Positions 442-490 (GPPGPAGPAGIMGPPGLQGPTGPPGDPGDRGPPGRPGLPGADGLPGPPG) constitute a Collagen-like 1 domain. Composition is skewed to low complexity over residues 449–461 (PAGI…LQGP) and 479–496 (LPGA…LMLP). Residues 509–511 (ISA) form a short nonhelical segment region. The interval 512–528 (QEAQAQAILQQARIALR) is telopeptide. A disordered region spans residues 528 to 1563 (RGPPGPMGLT…TRRHTEGMQA (1036 aa)). Residues 529–1542 (GPPGPMGLTG…PGSPGPPGEV (1014 aa)) form a triple-helical region region. 4 Collagen-like domains span residues 532 to 586 (GPMG…GADG), 583 to 641 (GADG…EIGP), 616 to 674 (GERG…VDGP), and 643 to 699 (GLPG…PGPQ). 2 stretches are compositionally biased toward gly residues: residues 541-550 (GPVGGPGSSG) and 583-592 (GADGGRGMPG). At K612 the chain carries Allysine. A compositionally biased stretch (low complexity) spans 641-662 (PRGLPGEAGPRGLLGPRGTPGA). Pro residues predominate over residues 699–710 (QGLPGPQGPIGP). Residues 717 to 728 (QGKPGLAGLPGA) show a composition bias toward low complexity. Residues 807 to 816 (RGEDGPEGPK) are compositionally biased toward basic and acidic residues. Low complexity-rich tracts occupy residues 875-903 (KPGP…PGPK), 918-927 (RGPQGPQGPV), 941-960 (KDGL…QGKT), 971-981 (PQGPTGETGPI), 1032-1041 (RGLPGAQGAP), and 1058-1074 (SPGE…IGLP). Residues 1076 to 1085 (RPGPQGPPGP) show a composition bias toward pro residues. Residues 1086 to 1110 (AGEKGAPGEKGPQGPAGRDGVQGPV) show a composition bias toward low complexity. A compositionally biased stretch (gly residues) spans 1162-1171 (GIAGGDGEPG). Composition is skewed to pro residues over residues 1218 to 1229 (MGPPGPPGPRGP) and 1343 to 1362 (QPGP…PGKR). 2 stretches are compositionally biased toward low complexity: residues 1385-1394 (AEGPPGKTGP) and 1419-1428 (QGLPGAAGQD). Collagen-like domains are found at residues 1393 to 1450 (GPVG…GSKG), 1429 to 1487 (GPPG…AKGD), and 1483 to 1541 (GAKG…PPGE). A compositionally biased stretch (pro residues) spans 1430 to 1439 (PPGPMGPPGL). K1452 bears the Allysine mark. Low complexity predominate over residues 1455 to 1464 (PGLIGLIGPP). Residues 1483–1492 (GAKGDGGIPG) are compositionally biased toward gly residues. 2 stretches are compositionally biased toward pro residues: residues 1493-1509 (PAGP…PGPQ) and 1530-1539 (PGPPGSPGPP). A nonhelical region (C-terminal) region spans residues 1543-1563 (IQPLPILSSKKTRRHTEGMQA). The propeptide at 1564-1806 (DADDNILDYS…FEVGPVCFLG (243 aa)) is C-terminal propeptide. In terms of domain architecture, Fibrillar collagen NC1 spans 1577–1805 (EEIFGSLNSL…GFEVGPVCFL (229 aa)). C1607 and C1639 are disulfide-bonded. D1625, N1627, Q1628, C1630, and D1633 together coordinate Ca(2+). N1640 carries an N-linked (GlcNAc...) asparagine glycan. Intrachain disulfides connect C1648–C1803 and C1714–C1757.

Belongs to the fibrillar collagen family. As to quaternary structure, trimers composed of three different chains: alpha 1(XI), alpha 2(XI), and alpha 3(XI). Alpha 3(XI) is a post-translational modification of alpha 1(II). Alpha 1(V) can also be found instead of alpha 3(XI)=1(II). In terms of processing, prolines at the third position of the tripeptide repeating unit (G-X-Y) are hydroxylated in some or all of the chains. Post-translationally, N-glycosylated. As to expression, cartilage, placenta and some tumor or virally transformed cell lines. Isoforms using exon IIA or IIB are found in the cartilage while isoforms using only exon IIB are found in the tendon.

The protein resides in the secreted. It localises to the extracellular space. The protein localises to the extracellular matrix. May play an important role in fibrillogenesis by controlling lateral growth of collagen II fibrils. The sequence is that of Collagen alpha-1(XI) chain (COL11A1) from Homo sapiens (Human).